A 263-amino-acid polypeptide reads, in one-letter code: Endonuclease 8 (263 aa).

The Schiff-base intermediate with DNA role is filled by proline 2. Residue glutamate 3 is the Proton donor of the active site. Residue lysine 53 is the Proton donor; for beta-elimination activity of the active site. DNA contacts are provided by glutamine 70, arginine 125, and asparagine 169. The segment at 229–263 (KVFHRDGEVCERCGGIIEKTTLSSRPFYWCPHCQK) adopts an FPG-type zinc-finger fold. The Proton donor; for delta-elimination activity role is filled by arginine 253.

The protein belongs to the FPG family. Zn(2+) is required as a cofactor.

The enzyme catalyses 2'-deoxyribonucleotide-(2'-deoxyribose 5'-phosphate)-2'-deoxyribonucleotide-DNA = a 3'-end 2'-deoxyribonucleotide-(2,3-dehydro-2,3-deoxyribose 5'-phosphate)-DNA + a 5'-end 5'-phospho-2'-deoxyribonucleoside-DNA + H(+). Its function is as follows. Involved in base excision repair of DNA damaged by oxidation or by mutagenic agents. Acts as a DNA glycosylase that recognizes and removes damaged bases. Has a preference for oxidized pyrimidines, such as thymine glycol, 5,6-dihydrouracil and 5,6-dihydrothymine. Has AP (apurinic/apyrimidinic) lyase activity and introduces nicks in the DNA strand. Cleaves the DNA backbone by beta-delta elimination to generate a single-strand break at the site of the removed base with both 3'- and 5'-phosphates. In Salmonella newport (strain SL254), this protein is Endonuclease 8.